A 78-amino-acid polypeptide reads, in one-letter code: U-scoloptoxin(13)-Er1a (78 aa).

Positions Met1–Ala24 are cleaved as a signal peptide.

The protein belongs to the scoloptoxin-13 family. In terms of processing, contains 4 disulfide bonds. In terms of tissue distribution, expressed by the venom gland.

It is found in the secreted. The sequence is that of U-scoloptoxin(13)-Er1a from Ethmostigmus rubripes (Giant centipede).